A 305-amino-acid chain; its full sequence is UDP-3-O-acyl-N-acetylglucosamine deacetylase (305 aa).

H79, H238, and D242 together coordinate Zn(2+). Residue H265 is the Proton donor of the active site.

Belongs to the LpxC family. The cofactor is Zn(2+).

The catalysed reaction is a UDP-3-O-[(3R)-3-hydroxyacyl]-N-acetyl-alpha-D-glucosamine + H2O = a UDP-3-O-[(3R)-3-hydroxyacyl]-alpha-D-glucosamine + acetate. It participates in glycolipid biosynthesis; lipid IV(A) biosynthesis; lipid IV(A) from (3R)-3-hydroxytetradecanoyl-[acyl-carrier-protein] and UDP-N-acetyl-alpha-D-glucosamine: step 2/6. In terms of biological role, catalyzes the hydrolysis of UDP-3-O-myristoyl-N-acetylglucosamine to form UDP-3-O-myristoylglucosamine and acetate, the committed step in lipid A biosynthesis. The sequence is that of UDP-3-O-acyl-N-acetylglucosamine deacetylase from Salmonella agona (strain SL483).